Here is a 1478-residue protein sequence, read N- to C-terminus: ATP-binding cassette transporter abc2 (1478 aa).

The Vacuolar segment spans residues 1–25; that stretch reads MVLEQDLDPFVGGNWMNSAYKGFTF. The helical transmembrane segment at 26-46 threads the bilayer; it reads LSATWLAPNIYLLISGCLQYF. The Cytoplasmic segment spans residues 47 to 65; it reads YEVRKRSHYFHFRRFWTIW. Residues 66 to 85 form a helical membrane-spanning segment; that stretch reads LKSLVIMVLLFTHIYDCYKT. The N-linked (GlcNAc...) asparagine glycan is linked to asparagine 86. Residues 86–90 lie on the Vacuolar side of the membrane; it reads NESVW. Residues 91-104 traverse the membrane as a helical segment; it reads NVLSIITYFLALFL. Over 105–116 the chain is Cytoplasmic; the sequence is HVVEQPTLRIPM. The chain crosses the membrane as a helical span at residues 117-137; sequence ASLLMFWLFKFLASALVLLLR. At 138 to 154 the chain is on the vacuolar side; the sequence is PNYTMFPMLNVVPSITF. Asparagine 139 carries N-linked (GlcNAc...) asparagine glycosylation. A helical transmembrane segment spans residues 155–175; it reads FCSLVCLLAEIYVPPANRVWY. Over 176 to 259 the chain is Cytoplasmic; the sequence is PDDAAELEET…KKSSLYMWGV (84 aa). A helical transmembrane segment spans residues 260–280; that stretch reads LFLNHWKLTVVIIVLKLVQDV. Residues 268–557 enclose the ABC transmembrane type-1 1 domain; that stretch reads TVVIIVLKLV…LPIVVSSVLE (290 aa). The Vacuolar segment spans residues 281–310; the sequence is VAFIQPNLIRKIVIFVSSYSSEHPQPPQVG. A helical membrane pass occupies residues 311–331; sequence FSLAIAMFLTNVVQTALLQQY. Topologically, residues 332–387 are cytoplasmic; the sequence is FQLGMVLGMRWRSELITAIYRKSLRLSSAARQSRSVGDIVNYMSVDTQKVCDLTMF. The helical transmembrane segment at 388–408 threads the bilayer; the sequence is LFVIVSGPFQIVLALTNLYHL. The Vacuolar portion of the chain corresponds to 409 to 411; it reads VGY. A helical membrane pass occupies residues 412 to 432; that stretch reads GALSGAFVTFLLFPCNVVIAS. Over 433-495 the chain is Cytoplasmic; the sequence is IFKRFQNRQM…MLKKIGIVNT (63 aa). The helical transmembrane segment at 496-516 threads the bilayer; sequence IGNFTWLFAPILVSAATFGTF. Topologically, residues 517–539 are vacuolar; it reads IVLYGKTRVLSVDIVFACLSLFN. The chain crosses the membrane as a helical span at residues 540-560; the sequence is LLQFPLTMLPIVVSSVLEASV. Over 561–910 the chain is Cytoplasmic; sequence AISRIYGFLT…VKWKVYWTYF (350 aa). Residues 593–821 enclose the ABC transporter 1 domain; sequence LEIKKGTFSW…PDSQLFQLLS (229 aa). Residue 631 to 638 coordinates ATP; it reads GKVGMGKS. The tract at residues 828–867 is disordered; the sequence is TASSTGADTPLSRSQSVITSSTDVTSSASRSSDTVSNYPK. The span at 829–840 shows a compositional bias: polar residues; sequence ASSTGADTPLSR. 3 positions are modified to phosphoserine: serine 839, serine 843, and serine 863. Positions 841–863 are enriched in low complexity; that stretch reads SQSVITSSTDVTSSASRSSDTVS. A helical transmembrane segment spans residues 911 to 931; it reads KACSLFLIFLYFLFIIGGIGM. One can recognise an ABC transmembrane type-1 2 domain in the interval 918-1202; it reads IFLYFLFIIG…VVRQSVDVET (285 aa). Residues 932–968 are Vacuolar-facing; it reads NVGTNVWLKHWSEVNTQLGYNPKPYFYLGIYTLFGLL. The chain crosses the membrane as a helical span at residues 969–990; that stretch reads SCALISLSSLTITVFCAIKSCR. The Cytoplasmic segment spans residues 991–1033; the sequence is YLHDSMVKAVLRAPMSFFETTPTGRILNRFSSDVYRVDEVISR. A helical transmembrane segment spans residues 1034–1054; sequence VFMFFFRNLFQIVFVLAVICY. A topological domain (vacuolar) is located at residue serine 1055. A helical transmembrane segment spans residues 1056–1076; sequence SPMFMILIVPLFFLYRYNQVY. Over 1077-1147 the chain is Cytoplasmic; it reads YTQTSRELKR…SSNRWQAIRV (71 aa). The chain crosses the membrane as a helical span at residues 1148-1168; the sequence is EAIGALVVFSSAFFGVLSAVR. Residues 1169–1172 are Vacuolar-facing; that stretch reads GNPN. The chain crosses the membrane as a helical span at residues 1173–1193; that stretch reads SGLVGLSLSYAVQITQSLTFV. Over 1194-1478 the chain is Cytoplasmic; it reads VRQSVDVETN…YSLAKESGLI (285 aa). The ABC transporter 2 domain maps to 1239-1473; that stretch reads IKFDHYSVRY…KASLFYSLAK (235 aa). Residue 1273–1280 participates in ATP binding; it reads GRTGAGKS.

Belongs to the ABC transporter superfamily. ABCC family. Conjugate transporter (TC 3.A.1.208) subfamily.

It is found in the vacuole membrane. Its function is as follows. Involved in vacuolar sequestration of glutathione S-conjugates. Together with abc4, required for accumulation of a red pigment (ade pigment) in the vacuole of a mutant affected in the adenine biosynthetic pathway. The polypeptide is ATP-binding cassette transporter abc2 (abc2) (Schizosaccharomyces pombe (strain 972 / ATCC 24843) (Fission yeast)).